Consider the following 477-residue polypeptide: Stromelysin-3 (477 aa).

The signal sequence occupies residues 1 to 17 (MHLLILLPALCVLGAHS). A propeptide spans 18–85 (APLSYTYLQH…SSSGRNRQKR (68 aa)) (activation peptide). The tract at residues 64-83 (RCGVPDIPAPPDSSSGRNRQ) is disordered. Residues Cys65, His152, and Asp154 each contribute to the Zn(2+) site. Ca(2+) is bound by residues Asp159, Gly160, Gly162, and Ile164. The Zn(2+) site is built by His167, His180, and His203. Glu204 is a catalytic residue. Zn(2+)-binding residues include His207 and His213. Cys279 and Cys466 are joined by a disulfide. 4 Hemopexin repeats span residues 280–324 (KTNF…WRGI), 325–369 (PDTV…GISV), 370–418 (TQIQ…WRGV), and 419–466 (PKGI…FFNC).

The protein belongs to the peptidase M10A family. Requires Ca(2+) as cofactor. The cofactor is Zn(2+). As to expression, expressed in fibroblast cells that are activated by thyroid hormone. High levels in resorbing tail.

The protein localises to the secreted. Its subcellular location is the extracellular space. It is found in the extracellular matrix. In terms of biological role, may be involved in the modification of the extracellular matrix during metamorphic apoptosis. The polypeptide is Stromelysin-3 (mmp11) (Xenopus laevis (African clawed frog)).